Here is a 79-residue protein sequence, read N- to C-terminus: Acyl carrier protein (79 aa).

The Carrier domain maps to 2-77 (SNIEERVKKI…QAIDYINAHA (76 aa)). Ser37 bears the O-(pantetheine 4'-phosphoryl)serine mark.

The protein belongs to the acyl carrier protein (ACP) family. Post-translationally, 4'-phosphopantetheine is transferred from CoA to a specific serine of apo-ACP by AcpS. This modification is essential for activity because fatty acids are bound in thioester linkage to the sulfhydryl of the prosthetic group.

It localises to the cytoplasm. It functions in the pathway lipid metabolism; fatty acid biosynthesis. Its function is as follows. Carrier of the growing fatty acid chain in fatty acid biosynthesis. This is Acyl carrier protein from Thioalkalivibrio sulfidiphilus (strain HL-EbGR7).